Consider the following 54-residue polypeptide: ATP synthase F(0) complex subunit 8 (54 aa).

Residues 9-29 (WFMILFFSWVIFLTIIPTKII) traverse the membrane as a helical segment. The tract at residues 35–54 (NDPTQVDAKEHKNDTWNWPW) is disordered.

It belongs to the ATPase protein 8 family. As to quaternary structure, component of the ATP synthase complex composed at least of ATP5F1A/subunit alpha, ATP5F1B/subunit beta, ATP5MC1/subunit c (homooctomer), MT-ATP6/subunit a, MT-ATP8/subunit 8, ATP5ME/subunit e, ATP5MF/subunit f, ATP5MG/subunit g, ATP5MK/subunit k, ATP5MJ/subunit j, ATP5F1C/subunit gamma, ATP5F1D/subunit delta, ATP5F1E/subunit epsilon, ATP5PF/subunit F6, ATP5PB/subunit b, ATP5PD/subunit d, ATP5PO/subunit OSCP. ATP synthase complex consists of a soluble F(1) head domain (subunits alpha(3) and beta(3)) - the catalytic core - and a membrane F(0) domain - the membrane proton channel (subunits c, a, 8, e, f, g, k and j). These two domains are linked by a central stalk (subunits gamma, delta, and epsilon) rotating inside the F1 region and a stationary peripheral stalk (subunits F6, b, d, and OSCP).

The protein resides in the mitochondrion membrane. Functionally, subunit 8, of the mitochondrial membrane ATP synthase complex (F(1)F(0) ATP synthase or Complex V) that produces ATP from ADP in the presence of a proton gradient across the membrane which is generated by electron transport complexes of the respiratory chain. ATP synthase complex consist of a soluble F(1) head domain - the catalytic core - and a membrane F(1) domain - the membrane proton channel. These two domains are linked by a central stalk rotating inside the F(1) region and a stationary peripheral stalk. During catalysis, ATP synthesis in the catalytic domain of F(1) is coupled via a rotary mechanism of the central stalk subunits to proton translocation. In vivo, can only synthesize ATP although its ATP hydrolase activity can be activated artificially in vitro. Part of the complex F(0) domain. This Danio rerio (Zebrafish) protein is ATP synthase F(0) complex subunit 8.